Here is a 372-residue protein sequence, read N- to C-terminus: CXADR-like membrane protein (372 aa).

Positions 1–17 are cleaved as a signal peptide; the sequence is MSLFFLWLVTYYVGTLG. Ig-like C2-type domains are found at residues 18–126 and 134–223; these read THTE…VILK and PKCE…VRVT. Residues 18–234 lie on the Extracellular side of the membrane; sequence THTEIKRVAE…QYVQSIGMVA (217 aa). 2 disulfide bridges follow: Cys-34-Cys-110 and Cys-152-Cys-207. N-linked (GlcNAc...) asparagine glycosylation is found at Asn-73 and Asn-196. Residues 235-255 form a helical membrane-spanning segment; sequence GAVTGIVAGALLIFLLIWLLI. The Cytoplasmic portion of the chain corresponds to 256–372; the sequence is RRKSKERYEE…PSQSRAFQTV (117 aa). A compositionally biased stretch (basic and acidic residues) spans 263–280; sequence YEEEDRPNEIREDAEAPR. The interval 263 to 372 is disordered; that stretch reads YEEEDRPNEI…PSQSRAFQTV (110 aa). Composition is skewed to low complexity over residues 287–313 and 352–361; these read SSSSSGSRSSRSGSSSTRSTGNSASRS and LTKAETTLST. Residues 362 to 372 are compositionally biased toward polar residues; the sequence is MPSQSRAFQTV.

In terms of tissue distribution, predominantly expressed in the white adipose tissue.

The protein resides in the cell junction. Its subcellular location is the tight junction. It is found in the cell membrane. May be involved in the cell-cell adhesion. May play a role in adipocyte differentiation and development of obesity. Is required for normal small intestine development. This is CXADR-like membrane protein (Clmp) from Rattus norvegicus (Rat).